The sequence spans 43 residues: Protein PsbN (43 aa).

A helical membrane pass occupies residues 5–27; it reads TLVTIFISGSLVSFTGYALYTAF.

This sequence belongs to the PsbN family.

It is found in the plastid. It localises to the chloroplast thylakoid membrane. May play a role in photosystem I and II biogenesis. This is Protein PsbN from Piper cenocladum (Ant piper).